Here is a 320-residue protein sequence, read N- to C-terminus: Ferrochelatase (320 aa).

Fe cation is bound by residues H194 and E275.

It belongs to the ferrochelatase family. As to quaternary structure, monomer.

The protein localises to the cytoplasm. The catalysed reaction is heme b + 2 H(+) = protoporphyrin IX + Fe(2+). The protein operates within porphyrin-containing compound metabolism; protoheme biosynthesis; protoheme from protoporphyrin-IX: step 1/1. Functionally, catalyzes the ferrous insertion into protoporphyrin IX. The protein is Ferrochelatase of Shigella boydii serotype 4 (strain Sb227).